The following is a 434-amino-acid chain: Adenylosuccinate synthetase (434 aa).

Residues 22–28 and 50–52 each bind GTP; these read GDEGKGK and GHT. Residue Asp23 is the Proton acceptor of the active site. Residues Asp23 and Gly50 each coordinate Mg(2+). IMP contacts are provided by residues 23 to 26, 48 to 51, Thr139, Arg153, Gln234, Thr249, and Arg313; these read DEGK and NAGH. The active-site Proton donor is the His51. Substrate is bound at residue 309–315; sequence ATTGRKR. GTP is bound by residues Arg315, 341–343, and 423–425; these read KLD and SVG.

This sequence belongs to the adenylosuccinate synthetase family. Homodimer. It depends on Mg(2+) as a cofactor.

It localises to the cytoplasm. The enzyme catalyses IMP + L-aspartate + GTP = N(6)-(1,2-dicarboxyethyl)-AMP + GDP + phosphate + 2 H(+). It participates in purine metabolism; AMP biosynthesis via de novo pathway; AMP from IMP: step 1/2. Plays an important role in the de novo pathway of purine nucleotide biosynthesis. Catalyzes the first committed step in the biosynthesis of AMP from IMP. In Chlorobium phaeobacteroides (strain DSM 266 / SMG 266 / 2430), this protein is Adenylosuccinate synthetase.